A 351-amino-acid chain; its full sequence is Soluble interferon alpha/beta receptor OPG204 (351 aa).

The first 19 residues, 1-19, serve as a signal peptide directing secretion; it reads MTMKMMVHIYFVSLLLLLF. 2 consecutive Ig-like C2-type domains span residues 65-147 and 155-237; these read LGEP…RSHI and PKTY…IVVS. 2 disulfide bridges follow: Cys-73–Cys-129 and Cys-172–Cys-221. N-linked (GlcNAc...) asparagine; by host glycosylation is found at Asn-117, Asn-182, Asn-261, Asn-269, and Asn-321. Residues 246-345 form the Ig-like V-type domain; that stretch reads PSQDHRFKLI…HNYYFEKTLT (100 aa). A disulfide bridge connects residues Cys-272 and Cys-333.

It belongs to the interleukin-1 receptor family. As to quaternary structure, interacts with host IFNA1.

Its subcellular location is the secreted. Functionally, counteracts the antiviral effects of host IFN-alpha/beta and key IFN-inducible proteins involved in viral RNA degradation suxh as host OAS1. Acts as a soluble IFN-alpha receptor and thus inhibits the interaction between host IFN-alpha and its receptor. This Vaccinia virus (strain Western Reserve) (VACV) protein is Soluble interferon alpha/beta receptor OPG204 (OPG204).